The sequence spans 161 residues: Nucleotide-binding protein mma_0840 (161 aa).

The protein belongs to the YajQ family.

Functionally, nucleotide-binding protein. The polypeptide is Nucleotide-binding protein mma_0840 (Janthinobacterium sp. (strain Marseille) (Minibacterium massiliensis)).